The sequence spans 83 residues: Small ribosomal subunit protein bS16 (83 aa).

Belongs to the bacterial ribosomal protein bS16 family.

The chain is Small ribosomal subunit protein bS16 from Borrelia turicatae (strain 91E135).